The primary structure comprises 376 residues: Oligopeptide transport system permease protein OppC (376 aa).

7 helical membrane-spanning segments follow: residues 46-66, 149-169, 173-193, 209-229, 242-262, 297-317, and 341-361; these read WAILFFLLIVLIILLAIIVPL, YPLLGTNGLGVDIWTLLWASM, LWIAIVVALVSMVFGTIYGAI, IIEIIDLVPSILWIIVLGATF, VIFTLIFVFWTWPAATTRIYI, LAVVFVSLIPAVIGYEASLVF, and IALITSSIVSFAILTVSTRVF. An ABC transmembrane type-1 domain is found at 169-362; sequence MAKSLWIAIV…ILTVSTRVFA (194 aa).

This sequence belongs to the binding-protein-dependent transport system permease family. OppBC subfamily. In terms of assembly, the complex is composed of two ATP-binding proteins (OppD and OppF), two transmembrane proteins (OppB and OppC) and a solute-binding protein (OppA).

Its subcellular location is the cell membrane. In terms of biological role, part of the ABC transporter complex OppABCDF involved in the uptake of oligopeptides. Probably responsible for the translocation of the substrate across the membrane. The protein is Oligopeptide transport system permease protein OppC (oppC) of Mycoplasma pneumoniae (strain ATCC 29342 / M129 / Subtype 1) (Mycoplasmoides pneumoniae).